We begin with the raw amino-acid sequence, 147 residues long: Large ribosomal subunit protein uL13 (147 aa).

A disordered region spans residues aspartate 128–glutamine 147.

This sequence belongs to the universal ribosomal protein uL13 family. As to quaternary structure, part of the 50S ribosomal subunit.

Functionally, this protein is one of the early assembly proteins of the 50S ribosomal subunit, although it is not seen to bind rRNA by itself. It is important during the early stages of 50S assembly. The chain is Large ribosomal subunit protein uL13 from Streptomyces coelicolor (strain ATCC BAA-471 / A3(2) / M145).